A 339-amino-acid chain; its full sequence is 3-isopropylmalate dehydrogenase (339 aa).

Positions 88, 98, 122, and 212 each coordinate substrate. Residues aspartate 212, aspartate 236, and aspartate 240 each contribute to the Mg(2+) site. 272–284 is an NAD(+) binding site; that stretch reads GSAPDIAGQGIAD.

It belongs to the isocitrate and isopropylmalate dehydrogenases family. LeuB type 2 subfamily. As to quaternary structure, homodimer. It depends on Mg(2+) as a cofactor. Mn(2+) serves as cofactor.

It is found in the cytoplasm. The catalysed reaction is (2R,3S)-3-isopropylmalate + NAD(+) = 4-methyl-2-oxopentanoate + CO2 + NADH. It participates in amino-acid biosynthesis; L-leucine biosynthesis; L-leucine from 3-methyl-2-oxobutanoate: step 3/4. Its function is as follows. Catalyzes the oxidation of 3-carboxy-2-hydroxy-4-methylpentanoate (3-isopropylmalate) to 3-carboxy-4-methyl-2-oxopentanoate. The product decarboxylates to 4-methyl-2 oxopentanoate. In Corynebacterium diphtheriae (strain ATCC 700971 / NCTC 13129 / Biotype gravis), this protein is 3-isopropylmalate dehydrogenase.